The following is a 150-amino-acid chain: Azurin (150 aa).

A signal peptide spans 1-21; the sequence is MFKQVLGGMALMAAFSAPVLA. One can recognise a Plastocyanin-like domain in the interval 22–150; that stretch reads AECSVDIAGT…LMKGTLKLVD (129 aa). C24 and C47 are disulfide-bonded. The Cu cation site is built by H67, C133, H138, and M142.

Its subcellular location is the periplasm. The polypeptide is Azurin (Bordetella bronchiseptica (strain ATCC BAA-588 / NCTC 13252 / RB50) (Alcaligenes bronchisepticus)).